Consider the following 201-residue polypeptide: Large ribosomal subunit protein uL4 (201 aa).

Positions 45–75 are disordered; sequence AQKSRSEVSGSGKKPWRQKGTGRARSGSLRS.

Belongs to the universal ribosomal protein uL4 family. As to quaternary structure, part of the 50S ribosomal subunit.

In terms of biological role, one of the primary rRNA binding proteins, this protein initially binds near the 5'-end of the 23S rRNA. It is important during the early stages of 50S assembly. It makes multiple contacts with different domains of the 23S rRNA in the assembled 50S subunit and ribosome. Functionally, forms part of the polypeptide exit tunnel. In Buchnera aphidicola subsp. Cinara cedri (strain Cc), this protein is Large ribosomal subunit protein uL4.